We begin with the raw amino-acid sequence, 201 residues long: Peptidyl-tRNA hydrolase (201 aa).

Tyr-14 is a tRNA binding site. The Proton acceptor role is filled by His-19. TRNA is bound by residues Tyr-64, Asn-66, and Asn-112.

Belongs to the PTH family. As to quaternary structure, monomer.

The protein resides in the cytoplasm. The enzyme catalyses an N-acyl-L-alpha-aminoacyl-tRNA + H2O = an N-acyl-L-amino acid + a tRNA + H(+). Its function is as follows. Hydrolyzes ribosome-free peptidyl-tRNAs (with 1 or more amino acids incorporated), which drop off the ribosome during protein synthesis, or as a result of ribosome stalling. Catalyzes the release of premature peptidyl moieties from peptidyl-tRNA molecules trapped in stalled 50S ribosomal subunits, and thus maintains levels of free tRNAs and 50S ribosomes. The polypeptide is Peptidyl-tRNA hydrolase (Bradyrhizobium diazoefficiens (strain JCM 10833 / BCRC 13528 / IAM 13628 / NBRC 14792 / USDA 110)).